A 214-amino-acid chain; its full sequence is Threonylcarbamoyl-AMP synthase (214 aa).

Residues 9-214 enclose the YrdC-like domain; sequence TDSVIQAAHW…GDALTGQIIR (206 aa).

It belongs to the SUA5 family. TsaC subfamily.

Its subcellular location is the cytoplasm. The enzyme catalyses L-threonine + hydrogencarbonate + ATP = L-threonylcarbamoyladenylate + diphosphate + H2O. Functionally, required for the formation of a threonylcarbamoyl group on adenosine at position 37 (t(6)A37) in tRNAs that read codons beginning with adenine. Catalyzes the conversion of L-threonine, HCO(3)(-)/CO(2) and ATP to give threonylcarbamoyl-AMP (TC-AMP) as the acyladenylate intermediate, with the release of diphosphate. This Psychrobacter arcticus (strain DSM 17307 / VKM B-2377 / 273-4) protein is Threonylcarbamoyl-AMP synthase.